Here is a 132-residue protein sequence, read N- to C-terminus: Large ribosomal subunit protein uL22 (132 aa).

Belongs to the universal ribosomal protein uL22 family. As to quaternary structure, part of the 50S ribosomal subunit.

In terms of biological role, this protein binds specifically to 23S rRNA; its binding is stimulated by other ribosomal proteins, e.g. L4, L17, and L20. It is important during the early stages of 50S assembly. It makes multiple contacts with different domains of the 23S rRNA in the assembled 50S subunit and ribosome. Its function is as follows. The globular domain of the protein is located near the polypeptide exit tunnel on the outside of the subunit, while an extended beta-hairpin is found that lines the wall of the exit tunnel in the center of the 70S ribosome. This is Large ribosomal subunit protein uL22 from Rhodospirillum centenum (strain ATCC 51521 / SW).